Here is a 206-residue protein sequence, read N- to C-terminus: MPSLLITALFLNVIIYVINTVGAATVDGLLWLLYIQLPTGTSQIAREQRHMKREVVQLKHEMSSTSSQDEFAKWAKLRRRHDKALEAYEAKNNELTQSKSTFDITIKIARWAATSGLMLFLQFWYSKTPIFTLPPGWIPWQVQWVLSFPRAPMGTVSIQIWSGACATVVALVGDAMKASLAYVSKPKIDRIKLGATMEGKEGKKRQ.

Residues 1-4 (MPSL) lie on the Lumenal side of the membrane. The helical transmembrane segment at 5-24 (LITALFLNVIIYVINTVGAA) threads the bilayer. Residues 25-110 (TVDGLLWLLY…TFDITIKIAR (86 aa)) are Cytoplasmic-facing. Residues 75–100 (AKLRRRHDKALEAYEAKNNELTQSKS) adopt a coiled-coil conformation. Residues 111–131 (WAATSGLMLFLQFWYSKTPIF) traverse the membrane as a helical segment. At 132–155 (TLPPGWIPWQVQWVLSFPRAPMGT) the chain is on the lumenal side. Residues 156 to 172 (VSIQIWSGACATVVALV) traverse the membrane as a helical segment. At 173 to 206 (GDAMKASLAYVSKPKIDRIKLGATMEGKEGKKRQ) the chain is on the cytoplasmic side.

This sequence belongs to the WRB/GET1 family. In terms of assembly, interacts with GET3.

Its subcellular location is the endoplasmic reticulum membrane. In terms of biological role, required for the post-translational delivery of tail-anchored (TA) proteins to the endoplasmic reticulum. Acts as a membrane receptor for soluble GET3, which recognizes and selectively binds the transmembrane domain of TA proteins in the cytosol. The protein is Protein GET1 of Ajellomyces capsulatus (strain H143) (Darling's disease fungus).